Here is a 206-residue protein sequence, read N- to C-terminus: Probable nicotinate-nucleotide adenylyltransferase (206 aa).

The protein belongs to the NadD family.

The catalysed reaction is nicotinate beta-D-ribonucleotide + ATP + H(+) = deamido-NAD(+) + diphosphate. The protein operates within cofactor biosynthesis; NAD(+) biosynthesis; deamido-NAD(+) from nicotinate D-ribonucleotide: step 1/1. Its function is as follows. Catalyzes the reversible adenylation of nicotinate mononucleotide (NaMN) to nicotinic acid adenine dinucleotide (NaAD). The protein is Probable nicotinate-nucleotide adenylyltransferase of Gloeobacter violaceus (strain ATCC 29082 / PCC 7421).